The following is a 102-amino-acid chain: U3-aranetoxin-Ce1a (102 aa).

The N-terminal stretch at 1–21 (MKHLSIFFVFFCCICVMLCDA) is a signal peptide.

This sequence belongs to the neurotoxin 20 family. As to expression, expressed by the venom gland.

The protein resides in the secreted. This is U3-aranetoxin-Ce1a from Caerostris extrusa (Bark spider).